The following is a 99-amino-acid chain: Aspartyl/glutamyl-tRNA(Asn/Gln) amidotransferase subunit C (99 aa).

This sequence belongs to the GatC family. Heterotrimer of A, B and C subunits.

It catalyses the reaction L-glutamyl-tRNA(Gln) + L-glutamine + ATP + H2O = L-glutaminyl-tRNA(Gln) + L-glutamate + ADP + phosphate + H(+). The catalysed reaction is L-aspartyl-tRNA(Asn) + L-glutamine + ATP + H2O = L-asparaginyl-tRNA(Asn) + L-glutamate + ADP + phosphate + 2 H(+). Allows the formation of correctly charged Asn-tRNA(Asn) or Gln-tRNA(Gln) through the transamidation of misacylated Asp-tRNA(Asn) or Glu-tRNA(Gln) in organisms which lack either or both of asparaginyl-tRNA or glutaminyl-tRNA synthetases. The reaction takes place in the presence of glutamine and ATP through an activated phospho-Asp-tRNA(Asn) or phospho-Glu-tRNA(Gln). The protein is Aspartyl/glutamyl-tRNA(Asn/Gln) amidotransferase subunit C of Delftia acidovorans (strain DSM 14801 / SPH-1).